A 303-amino-acid polypeptide reads, in one-letter code: Probable cell division protein WhiA (303 aa).

The segment at residues 272–303 (SIQQVADALEFPITKSGVNHRLRKINKIADDL) is a DNA-binding region (H-T-H motif).

Belongs to the WhiA family.

Involved in cell division and chromosome segregation. This chain is Probable cell division protein WhiA, found in Streptococcus pyogenes serotype M12 (strain MGAS2096).